Here is a 169-residue protein sequence, read N- to C-terminus: S-ribosylhomocysteine lyase (169 aa).

The Fe cation site is built by H54, H58, and C128.

It belongs to the LuxS family. As to quaternary structure, homodimer. It depends on Fe cation as a cofactor.

It carries out the reaction S-(5-deoxy-D-ribos-5-yl)-L-homocysteine = (S)-4,5-dihydroxypentane-2,3-dione + L-homocysteine. Functionally, involved in the synthesis of autoinducer 2 (AI-2) which is secreted by bacteria and is used to communicate both the cell density and the metabolic potential of the environment. The regulation of gene expression in response to changes in cell density is called quorum sensing. Catalyzes the transformation of S-ribosylhomocysteine (RHC) to homocysteine (HC) and 4,5-dihydroxy-2,3-pentadione (DPD). In Shewanella pealeana (strain ATCC 700345 / ANG-SQ1), this protein is S-ribosylhomocysteine lyase.